The primary structure comprises 215 residues: Endoplasmic reticulum vesicle protein 25 (215 aa).

The first 21 residues, 1–21 (MQSLITYIALVFSLFVSSAIG), serve as a signal peptide directing secretion. Over 22–184 (LHLEVPALPN…TNESTNSRVK (163 aa)) the chain is Lumenal. Residues 34–125 (PVCIRDFVQE…VRSVELDIES (92 aa)) form the GOLD domain. A helical membrane pass occupies residues 185–205 (WFSIVVIASLVGFGVWQIQYL). The Cytoplasmic portion of the chain corresponds to 206–215 (RHYFKVKHII).

It belongs to the EMP24/GP25L family.

It localises to the endoplasmic reticulum membrane. Its subcellular location is the golgi apparatus membrane. In terms of biological role, constituent of COPII-coated endoplasmic reticulum-derived transport vesicles. Required for efficient transport of a subset of secretory proteins to the Golgi. Facilitates retrograde transport from the Golgi to the endoplasmic reticulum. This chain is Endoplasmic reticulum vesicle protein 25 (ERV25), found in Candida albicans (strain SC5314 / ATCC MYA-2876) (Yeast).